The primary structure comprises 298 residues: 33 kDa chaperonin (298 aa).

Disulfide bonds link Cys-237–Cys-239 and Cys-270–Cys-273.

The protein belongs to the HSP33 family. In terms of processing, under oxidizing conditions two disulfide bonds are formed involving the reactive cysteines. Under reducing conditions zinc is bound to the reactive cysteines and the protein is inactive.

It is found in the cytoplasm. Redox regulated molecular chaperone. Protects both thermally unfolding and oxidatively damaged proteins from irreversible aggregation. Plays an important role in the bacterial defense system toward oxidative stress. The sequence is that of 33 kDa chaperonin from Enterococcus faecalis (strain ATCC 700802 / V583).